The primary structure comprises 500 residues: Cysteine--tRNA ligase (500 aa).

Residue C30 participates in Zn(2+) binding. The short motif at 32 to 42 (PTVYDYAHIGN) is the 'HIGH' region element. Positions 224, 263, and 267 each coordinate Zn(2+). The 'KMSKS' region signature appears at 296–300 (KMSKS). ATP is bound at residue K299.

Belongs to the class-I aminoacyl-tRNA synthetase family. In terms of assembly, monomer. The cofactor is Zn(2+).

Its subcellular location is the cytoplasm. The catalysed reaction is tRNA(Cys) + L-cysteine + ATP = L-cysteinyl-tRNA(Cys) + AMP + diphosphate. The chain is Cysteine--tRNA ligase from Bartonella bacilliformis (strain ATCC 35685 / KC583 / Herrer 020/F12,63).